The following is a 216-amino-acid chain: Eukaryotic translation initiation factor 3 subunit K (216 aa).

The PCI domain occupies 40 to 202; it reads YDLDANLAVL…HIKSKNIAEK (163 aa).

This sequence belongs to the eIF-3 subunit K family. Component of the eukaryotic translation initiation factor 3 (eIF-3) complex.

It is found in the cytoplasm. Component of the eukaryotic translation initiation factor 3 (eIF-3) complex, which is involved in protein synthesis of a specialized repertoire of mRNAs and, together with other initiation factors, stimulates binding of mRNA and methionyl-tRNAi to the 40S ribosome. The eIF-3 complex specifically targets and initiates translation of a subset of mRNAs involved in cell proliferation. This is Eukaryotic translation initiation factor 3 subunit K from Nematostella vectensis (Starlet sea anemone).